Consider the following 355-residue polypeptide: Guanine nucleotide-binding protein G(z) subunit alpha (355 aa).

Residues 1–14 show a composition bias toward basic and acidic residues; sequence MGCRQSSEEKEAAR. Residues 1–26 are disordered; that stretch reads MGCRQSSEEKEAARRSRRIDRHLRSE. A lipid anchor (N-myristoyl glycine) is attached at glycine 2. Cysteine 3 carries the S-palmitoyl cysteine lipid modification. A G-alpha domain is found at 32 to 355; it reads REIKLLLLGT…QNNLKYIGLC (324 aa). Residues 35-48 form a G1 motif region; the sequence is KLLLLGTSNSGKST. GTP-binding positions include 40-47, 176-182, 201-205, 270-273, and alanine 327; these read GTSNSGKS, LRSRDMT, DVGGQ, and NKKD. Mg(2+)-binding residues include serine 47 and threonine 182. Residues 174–182 are G2 motif; the sequence is DILRSRDMT. The tract at residues 197-206 is G3 motif; it reads FKMVDVGGQR. The interval 266 to 273 is G4 motif; that stretch reads ILFLNKKD. Positions 325–330 are G5 motif; sequence TCATDT.

Belongs to the G-alpha family. G(i/o/t/z) subfamily. In terms of assembly, G-proteins are composed of 3 units; alpha, beta and gamma. The alpha chain contains the guanine nucleotide binding site. Interacts with ADGRB2.

Its subcellular location is the membrane. Its function is as follows. Guanine nucleotide-binding proteins (G proteins) are involved as modulators or transducers in various transmembrane signaling systems. In Rattus norvegicus (Rat), this protein is Guanine nucleotide-binding protein G(z) subunit alpha (Gnaz).